Here is a 208-residue protein sequence, read N- to C-terminus: Histone 24 (208 aa).

Ser2 is subject to N-acetylserine. Lys14 is modified (N6-methyllysine). The H15 domain maps to 37 to 113 (AHPPYINMIK…GANGRFRVPE (77 aa)). Positions 101–208 (AGSGANGRFR…KKAAKPAAKA (108 aa)) are disordered. Over residues 114 to 138 (KAAAAKKPAAAKKPAAAKKPAAAKK) the composition is skewed to low complexity. Basic residues-rich tracts occupy residues 144–155 (KAKKPAAAKPKK) and 162–202 (KVKK…KKAA).

The protein belongs to the histone H1/H5 family. In terms of assembly, interacts with nmad-1. Interacts (when monomethylated at Lys-14) with chromobox protein homolog hpl-1; the interaction is direct. Interacts (when monomethylated at Lys-14) with histone H3 (when trimethylated on 'Lys-27'); the interaction is direct. In terms of processing, methylation at lysine 14 is necessary to regulate male tail development.

The protein resides in the nucleus. It localises to the chromosome. It is found in the cytoplasm. Histones H1 are necessary for the condensation of nucleosome chains into higher-order structures. Probably does not act as global transcriptional repressor. Acting in concert with chromobox protein homologs hpl-1 and hpl-2, involved in reproduction, somatic gonad development, male tail development, and vulval cell fate decisions; perhaps as a result of modulating expression of Hox genes mab-5 and egl-5. Plays a role in linking epigenetic regulation with the innate immune response. In Caenorhabditis elegans, this protein is Histone 24.